Reading from the N-terminus, the 183-residue chain is Putative calmodulin-like protein 2 (183 aa).

EF-hand domains lie at 7–42 (EQIA…LGQS), 43–78 (PTEA…KLRD), 80–115 (GAED…LGDP), and 116–151 (LSDD…KRRQ). The Ca(2+) site is built by Asp20, Asp22, Asp24, Thr26, Glu31, Asp56, Asp58, Ser60, Ser62, Glu67, Asp93, Asp95, Asn97, Glu104, Asp129, Asp131, Asp133, Gln135, and Glu140. The interval 154-183 (MEGHGSGGHRSSNSHKKSGCCGPNSSCTIL) is disordered. 2 S-palmitoyl cysteine lipidation sites follow: Cys173 and Cys174. A Cysteine methyl ester modification is found at Cys180. Residue Cys180 is the site of S-farnesyl cysteine attachment. A propeptide spans 181-183 (TIL) (removed in mature form).

Belongs to the calmodulin family.

The protein resides in the membrane. Its function is as follows. Potential calcium sensor. The sequence is that of Putative calmodulin-like protein 2 (CML2) from Oryza sativa subsp. japonica (Rice).